The primary structure comprises 404 residues: L-cysteine:1D-myo-inositol 2-amino-2-deoxy-alpha-D-glucopyranoside ligase 1 (404 aa).

Cysteine 47 contributes to the Zn(2+) binding site. L-cysteinyl-5'-AMP is bound by residues 47 to 50 (CGIT), threonine 62, and 85 to 87 (NIT). Residues 49-59 (ITPYDSTHLGH) carry the 'HIGH' region motif. The 'ERGGDP' region signature appears at 188 to 193 (ERGGDP). Tryptophan 228 serves as a coordination point for L-cysteinyl-5'-AMP. Zn(2+) is bound at residue cysteine 232. 250-252 (GSD) serves as a coordination point for L-cysteinyl-5'-AMP. Histidine 257 is a Zn(2+) binding site. Isoleucine 284 lines the L-cysteinyl-5'-AMP pocket. The 'KMSKS' region signature appears at 290–294 (KMSKS).

Belongs to the class-I aminoacyl-tRNA synthetase family. MshC subfamily. As to quaternary structure, monomer. Zn(2+) is required as a cofactor.

It catalyses the reaction 1D-myo-inositol 2-amino-2-deoxy-alpha-D-glucopyranoside + L-cysteine + ATP = 1D-myo-inositol 2-(L-cysteinylamino)-2-deoxy-alpha-D-glucopyranoside + AMP + diphosphate + H(+). In terms of biological role, catalyzes the ATP-dependent condensation of GlcN-Ins and L-cysteine to form L-Cys-GlcN-Ins. The chain is L-cysteine:1D-myo-inositol 2-amino-2-deoxy-alpha-D-glucopyranoside ligase 1 from Corynebacterium urealyticum (strain ATCC 43042 / DSM 7109).